Here is a 166-residue protein sequence, read N- to C-terminus: Small ribosomal subunit protein uS5 (166 aa).

In terms of domain architecture, S5 DRBM spans 11 to 74; it reads LREKLVAINR…EKARANMKRV (64 aa).

It belongs to the universal ribosomal protein uS5 family. As to quaternary structure, part of the 30S ribosomal subunit. Contacts proteins S4 and S8.

Functionally, with S4 and S12 plays an important role in translational accuracy. Its function is as follows. Located at the back of the 30S subunit body where it stabilizes the conformation of the head with respect to the body. This chain is Small ribosomal subunit protein uS5, found in Alkalilimnicola ehrlichii (strain ATCC BAA-1101 / DSM 17681 / MLHE-1).